Here is a 248-residue protein sequence, read N- to C-terminus: Ureidoacrylate amidohydrolase RutB (248 aa).

The Proton acceptor role is filled by Asp-41. Lys-150 is an active-site residue. Cys-183 functions as the Nucleophile in the catalytic mechanism.

Belongs to the isochorismatase family. RutB subfamily.

The catalysed reaction is (Z)-3-ureidoacrylate + H2O + H(+) = (Z)-3-aminoacrylate + NH4(+) + CO2. The enzyme catalyses (Z)-3-ureidoacrylate + H2O = (Z)-3-aminoacrylate + carbamate + H(+). It catalyses the reaction (Z)-2-methylureidoacrylate + H2O + H(+) = (Z)-2-methylaminoacrylate + NH4(+) + CO2. Its function is as follows. Hydrolyzes ureidoacrylate to form aminoacrylate and carbamate. The carbamate hydrolyzes spontaneously, thereby releasing one of the nitrogen atoms of the pyrimidine ring as ammonia and one of its carbon atoms as CO2. The protein is Ureidoacrylate amidohydrolase RutB of Methylorubrum extorquens (strain DSM 6343 / CIP 106787 / DM4) (Methylobacterium extorquens).